A 315-amino-acid polypeptide reads, in one-letter code: MKIIIFRVLTFFFVIFSVNVVAKEFTLDFSTAKTYVDSLNVIRSAIGTPLQTISSGGTSLLMIDSGTGDNLFAVDVRGIDPEEGRFNNLRLIVERNNLYVTGFVNRTNNVFYRFADFSHVTFPGTTAVTLSGDSSYTTLQRVAGISRTGMQINRHSLTTSYLDLMSHSGTSLTQSVARAMLRFVTVTAEALRFRQIQRGFRTTLDDLSGRSYVMTAEDVDLTLNWGRLSSVLPDYHGQDSVRVGRISFGSINAILGSVALILNCHHHASRVARMASDEFPSMCPADGRVRGITHNKILWDSSTLGAILMRRTISS.

The signal sequence occupies residues 1-22 (MKIIIFRVLTFFFVIFSVNVVA). An A1 region spans residues 23–273 (KEFTLDFSTA…CHHHASRVAR (251 aa)). Glu189 is a catalytic residue. A disulfide bond links Cys264 and Cys283. An A2 region spans residues 274–315 (MASDEFPSMCPADGRVRGITHNKILWDSSTLGAILMRRTISS).

It belongs to the ribosome-inactivating protein family. Shiga toxin contains a single subunit A and five copies of subunit B.

The catalysed reaction is Endohydrolysis of the N-glycosidic bond at one specific adenosine on the 28S rRNA.. The A subunit is responsible for inhibiting protein synthesis through the catalytic inactivation of 60S ribosomal subunits. After endocytosis, the A subunit is cleaved by furin in two fragments, A1 and A2: A1 is the catalytically active fragment, and A2 is essential for holotoxin assembly with the B subunits. The sequence is that of Shiga toxin subunit A (stxA) from Shigella sonnei (Shigella sonnei bacteriophage 7888).